A 471-amino-acid chain; its full sequence is E3 ubiquitin-protein ligase TRIM38 (471 aa).

The RING-type zinc finger occupies 16–62 (CSICKAMMSHPVSINCGHSYCKSCIQSYYCNVSPKTGWKMLGCPLCS). The segment at 90-131 (DQDMVCEEHEEKFNRFCEDDGQLLCWRCYWEDRHKGHTLAHV) adopts a B box-type zinc-finger fold. C95, H98, C117, and H123 together coordinate Zn(2+). A B30.2/SPRY domain is found at 276–471 (CNVSELYFDV…PLFLPAINNQ (196 aa)).

As to quaternary structure, interacts (via B30.2/SPRY domain) with TAB2 and TAB3.

The protein resides in the cytoplasm. It catalyses the reaction S-ubiquitinyl-[E2 ubiquitin-conjugating enzyme]-L-cysteine + [acceptor protein]-L-lysine = [E2 ubiquitin-conjugating enzyme]-L-cysteine + N(6)-ubiquitinyl-[acceptor protein]-L-lysine.. The protein operates within protein modification; protein ubiquitination. Its pathway is protein modification; protein sumoylation. Functionally, E3 ubiquitin-protein and E3 SUMO-protein ligase that acts as a regulator of innate immunity. Acts as a negative regulator of type I interferon IFN-beta production by catalyzing 'Lys-48'-linked polyubiquitination of AZI2/NAP1, leading to its degradation. Mediates 'Lys-48'-linked polyubiquitination and proteasomal degradation of the critical TLR adapter TICAM1, inhibiting TLR3-mediated type I interferon signaling. Acts as a positive regulator of the cGAS-STING pathway by acting as a E3 SUMO-protein ligase: mediates sumoylation of CGAS and STING, preventing their degradation and thereby activating the innate immune response to DNA virus. Also acts as a negative regulator of NF-kappa-B signaling independently of its E3 protein ligase activity by promoting lysosome-dependent degradation of TAB2 and TAB3 adapters. In Mus musculus (Mouse), this protein is E3 ubiquitin-protein ligase TRIM38.